The primary structure comprises 509 residues: Probable cytochrome P450 6a14 (509 aa).

C454 provides a ligand contact to heme.

The protein belongs to the cytochrome P450 family. Heme serves as cofactor.

It localises to the endoplasmic reticulum membrane. The protein resides in the microsome membrane. Its function is as follows. May be involved in the metabolism of insect hormones and in the breakdown of synthetic insecticides. In Drosophila melanogaster (Fruit fly), this protein is Probable cytochrome P450 6a14 (Cyp6a14).